The following is a 330-amino-acid chain: MQIESKTNTNIRSGLTLIAPFFLWGTAMVAMKGVLADTTPFFVATVRLIPAGILVLLWAMGQKRPQPQNWQGWGWIILFALVDGTLFQGFLAQGLERTGAGLGSVIIDSQPIAVALLSSWLFKEVIGGIGWLGLLLGVGGISLIGLPDEWFYQLWHLQGLSINWSGSALGSSGELWMLLASLSMAVGTVLIPFVSRRVDPVVATGWHMIIGGLPLLAIALVQDSEPWQNIDLWGWGNLAYATVFGSAIAYGIFFYLASKGNLTSLSSLTFLTPIFALSFSNLILEEQLSSLQWLGVAFTLVSIYLINQREQLKIQLRDIWSLVRKPVIND.

Transmembrane regions (helical) follow at residues 15–35 (LTLIAPFFLWGTAMVAMKGVL), 41–61 (FFVATVRLIPAGILVLLWAMG), 72–92 (GWGWIILFALVDGTLFQGFLA), 102–122 (LGSVIIDSQPIAVALLSSWLF), 125–145 (VIGGIGWLGLLLGVGGISLIG), 175–195 (LWMLLASLSMAVGTVLIPFVS), 201–221 (VVATGWHMIIGGLPLLAIALV), 238–258 (LAYATVFGSAIAYGIFFYLAS), 264–284 (SLSSLTFLTPIFALSFSNLIL), and 286–306 (EQLSSLQWLGVAFTLVSIYLI). EamA domains are found at residues 22 to 146 (FLWG…LIGL) and 182 to 308 (LSMA…LINQ).

This sequence belongs to the EamA transporter family.

It localises to the cell membrane. This is an uncharacterized protein from Synechocystis sp. (strain ATCC 27184 / PCC 6803 / Kazusa).